We begin with the raw amino-acid sequence, 398 residues long: UDP-N-acetylglucosamine--N-acetylmuramyl-(pentapeptide) pyrophosphoryl-undecaprenol N-acetylglucosamine transferase (398 aa).

Residues Thr-15–Gly-17, Asn-125, Arg-168, Ser-196, and Gln-297 contribute to the UDP-N-acetyl-alpha-D-glucosamine site.

This sequence belongs to the glycosyltransferase 28 family. MurG subfamily.

It localises to the cell inner membrane. It catalyses the reaction di-trans,octa-cis-undecaprenyl diphospho-N-acetyl-alpha-D-muramoyl-L-alanyl-D-glutamyl-meso-2,6-diaminopimeloyl-D-alanyl-D-alanine + UDP-N-acetyl-alpha-D-glucosamine = di-trans,octa-cis-undecaprenyl diphospho-[N-acetyl-alpha-D-glucosaminyl-(1-&gt;4)]-N-acetyl-alpha-D-muramoyl-L-alanyl-D-glutamyl-meso-2,6-diaminopimeloyl-D-alanyl-D-alanine + UDP + H(+). It participates in cell wall biogenesis; peptidoglycan biosynthesis. Functionally, cell wall formation. Catalyzes the transfer of a GlcNAc subunit on undecaprenyl-pyrophosphoryl-MurNAc-pentapeptide (lipid intermediate I) to form undecaprenyl-pyrophosphoryl-MurNAc-(pentapeptide)GlcNAc (lipid intermediate II). This is UDP-N-acetylglucosamine--N-acetylmuramyl-(pentapeptide) pyrophosphoryl-undecaprenol N-acetylglucosamine transferase from Erythrobacter litoralis (strain HTCC2594).